A 106-amino-acid polypeptide reads, in one-letter code: Transcriptional and immune response regulator (106 aa).

As to quaternary structure, monomer. Interacts with NOTCH2 (via ANK repeats), the interaction inhibits the nuclear translocation of NOTCH2 N2ICD. Interacts (C-terminus) with CBY1 (C-terminus), TCIM competes with CTNNB1 for the interaction with CBY1. Expressed in liver, expression levels decrease in regenerating liver. In bone marrow, expressed in large progenitor-like cells, cells with ring-shaped nuclei and, at lower, levels in hematopietic stem cell-like cells with round nuclei (at protein level).

Its subcellular location is the cytoplasm. It is found in the nucleus. The protein localises to the nucleolus. The protein resides in the nucleus speckle. Functionally, seems to be involved in the regulation of cell growth an differentiation, may play different and opposite roles depending on the tissue or cell type. May enhance the WNT-CTNNB1 pathway by relieving antagonistic activity of CBY1. Enhances the proliferation of follicular dendritic cells. Plays a role in the mitogen-activated MAPK2/3 signaling pathway, positively regulates G1-to-S-phase transition of the cell cycle. In endothelial cells, enhances key inflammatory mediators and inflammatory response through the modulation of NF-kappaB transcriptional regulatory activity. Involved in the regulation of heat shock response, seems to play a positive feedback with HSF1 to modulate heat-shock downstream gene expression. Plays a role in the regulation of hematopoiesis even if the mechanisms are unknown. In cancers such as thyroid or lung cancer, it has been described as promoter of cell proliferation, G1-to-S-phase transition and inhibitor of apoptosis. However, it negatively regulates self-renewal of liver cancer cells via suppresion of NOTCH2 signaling. This is Transcriptional and immune response regulator from Mus musculus (Mouse).